The following is a 328-amino-acid chain: Probable E3 ubiquitin-protein ligase RHC1A (328 aa).

Serine 2 carries the N-acetylserine modification. The segment at 190–231 (CPVCKDEFELGSEAKQMPCNHIYHSDCIVPWLVQHNSCPVCR) adopts an RING-type; atypical zinc-finger fold. The tract at residues 233-324 (ELPSASGPSS…QQSYMGYSGW (92 aa)) is disordered. The span at 238-250 (SGPSSSQNRTTPT) shows a compositional bias: polar residues. Low complexity-rich tracts occupy residues 251–266 (RNYR…NSRE) and 275–290 (FSSF…SSSS). The segment covering 291-300 (TQNRGGTRNS) has biased composition (polar residues).

It carries out the reaction S-ubiquitinyl-[E2 ubiquitin-conjugating enzyme]-L-cysteine + [acceptor protein]-L-lysine = [E2 ubiquitin-conjugating enzyme]-L-cysteine + N(6)-ubiquitinyl-[acceptor protein]-L-lysine.. The protein operates within protein modification; protein ubiquitination. Functionally, probable E3 ubiquitin-protein ligase that may possess E3 ubiquitin ligase activity in vitro. The sequence is that of Probable E3 ubiquitin-protein ligase RHC1A from Arabidopsis thaliana (Mouse-ear cress).